The primary structure comprises 143 residues: Transcriptional regulator MraZ (143 aa).

SpoVT-AbrB domains are found at residues Thr-5–Glu-47 and Thr-76–Ala-119.

The protein belongs to the MraZ family. As to quaternary structure, forms oligomers.

It is found in the cytoplasm. The protein resides in the nucleoid. The protein is Transcriptional regulator MraZ of Mycobacterium leprae (strain Br4923).